The chain runs to 598 residues: uncharacterized protein (598 aa).

This is an uncharacterized protein from Homo sapiens (Human).